Here is a 548-residue protein sequence, read N- to C-terminus: Chaperonin GroEL 1 (548 aa).

ATP contacts are provided by residues 30 to 33 (TLGP), K51, 87 to 91 (DGTTT), G415, 479 to 481 (NAA), and D495.

It belongs to the chaperonin (HSP60) family. In terms of assembly, forms a cylinder of 14 subunits composed of two heptameric rings stacked back-to-back. Interacts with the co-chaperonin GroES.

Its subcellular location is the cytoplasm. The enzyme catalyses ATP + H2O + a folded polypeptide = ADP + phosphate + an unfolded polypeptide.. In terms of biological role, together with its co-chaperonin GroES, plays an essential role in assisting protein folding. The GroEL-GroES system forms a nano-cage that allows encapsulation of the non-native substrate proteins and provides a physical environment optimized to promote and accelerate protein folding. The protein is Chaperonin GroEL 1 of Vibrio harveyi (Beneckea harveyi).